The following is a 396-amino-acid chain: NADH-quinone oxidoreductase subunit D (396 aa).

The protein belongs to the complex I 49 kDa subunit family. As to quaternary structure, NDH-1 is composed of 14 different subunits. Subunits NuoB, C, D, E, F, and G constitute the peripheral sector of the complex.

The protein localises to the cell inner membrane. It catalyses the reaction a quinone + NADH + 5 H(+)(in) = a quinol + NAD(+) + 4 H(+)(out). In terms of biological role, NDH-1 shuttles electrons from NADH, via FMN and iron-sulfur (Fe-S) centers, to quinones in the respiratory chain. The immediate electron acceptor for the enzyme in this species is believed to be ubiquinone. Couples the redox reaction to proton translocation (for every two electrons transferred, four hydrogen ions are translocated across the cytoplasmic membrane), and thus conserves the redox energy in a proton gradient. The protein is NADH-quinone oxidoreductase subunit D of Methylorubrum extorquens (strain PA1) (Methylobacterium extorquens).